A 141-amino-acid chain; its full sequence is Nucleoside diphosphate kinase (141 aa).

Residues K11, F59, R87, T93, R104, and N114 each contribute to the ATP site. The active-site Pros-phosphohistidine intermediate is H117.

It belongs to the NDK family. As to quaternary structure, homotetramer. The cofactor is Mg(2+).

The protein localises to the cytoplasm. The catalysed reaction is a 2'-deoxyribonucleoside 5'-diphosphate + ATP = a 2'-deoxyribonucleoside 5'-triphosphate + ADP. It catalyses the reaction a ribonucleoside 5'-diphosphate + ATP = a ribonucleoside 5'-triphosphate + ADP. In terms of biological role, major role in the synthesis of nucleoside triphosphates other than ATP. The ATP gamma phosphate is transferred to the NDP beta phosphate via a ping-pong mechanism, using a phosphorylated active-site intermediate. The sequence is that of Nucleoside diphosphate kinase from Pseudomonas putida (strain ATCC 47054 / DSM 6125 / CFBP 8728 / NCIMB 11950 / KT2440).